An 846-amino-acid polypeptide reads, in one-letter code: MAP7 domain-containing protein 1 (846 aa).

2 disordered regions span residues 1–153 and 186–210; these read MESG…ERAK and EQRL…EKNK. Over residues 24–41 the composition is skewed to pro residues; sequence EPRPSPEGDPSPPPPPTP. Phosphothreonine occurs at positions 49 and 53. Serine 95 carries the phosphoserine modification. The residue at position 99 (threonine 99) is a Phosphothreonine. Low complexity predominate over residues 113–123; sequence RSSQPSPTTVP. Phosphoserine is present on residues serine 115 and serine 118. Threonine 120 bears the Phosphothreonine mark. Residues serine 125 and serine 127 each carry the phosphoserine modification. Residues 130–224 adopt a coiled-coil conformation; that stretch reads AKQDVKKAGE…AAIQRSVKKT (95 aa). Positions 132 to 153 are enriched in basic and acidic residues; the sequence is QDVKKAGERHKLAKERREERAK. Residues serine 256, serine 275, serine 315, serine 368, and serine 401 each carry the phosphoserine modification. The tract at residues 318–816 is disordered; sequence TLPRNGRDQG…KGTAGDKSLG (499 aa). Positions 407–437 are enriched in basic and acidic residues; that stretch reads RRLEATPVQKKEKKDKERENEKEKSALARER. Positions 414 to 443 form a coiled coil; it reads VQKKEKKDKERENEKEKSALARERNLKKRQ. Phosphoserine occurs at positions 444, 448, 454, and 460. The segment covering 460–471 has biased composition (low complexity); sequence SPKSKARPSSPS. A Glycyl lysine isopeptide (Lys-Gly) (interchain with G-Cter in SUMO2) cross-link involves residue lysine 462. Phosphoserine is present on residues serine 479 and serine 496. A compositionally biased stretch (pro residues) spans 479–497; it reads SPCPSPGPGHALPPKPPSP. The span at 523–539 shows a compositional bias: basic and acidic residues; it reads PEDKNHRKSRAAEEKEP. Over residues 542–556 the composition is skewed to pro residues; sequence PASPAPSPVPSPTPA. Serine 544, serine 548, and serine 552 each carry phosphoserine. Threonine 554 carries the phosphothreonine modification. A compositionally biased stretch (low complexity) spans 568–579; it reads PAETAVPAVPAA. Residues 599–740 are a coiled coil; sequence TTDREEATRL…AETKKQDAKE (142 aa). Basic and acidic residues predominate over residues 600 to 740; sequence TDREEATRLL…AETKKQDAKE (141 aa). A Phosphothreonine modification is found at threonine 818.

The protein belongs to the MAP7 family.

Its subcellular location is the cytoplasm. It localises to the cytoskeleton. The protein localises to the spindle. It is found in the microtubule organizing center. The protein resides in the centrosome. Its subcellular location is the midbody. Microtubule-stabilizing protein involved in the control of cell motility and neurite outgrowth. Facilitate microtubule stabilization through the maintenance of acetylated stable microtubules. The protein is MAP7 domain-containing protein 1 (Map7d1) of Mus musculus (Mouse).